The primary structure comprises 485 residues: Glutamyl-tRNA(Gln) amidotransferase subunit A (485 aa).

Active-site charge relay system residues include Lys79 and Ser154. Ser178 (acyl-ester intermediate) is an active-site residue.

The protein belongs to the amidase family. GatA subfamily. Heterotrimer of A, B and C subunits.

The enzyme catalyses L-glutamyl-tRNA(Gln) + L-glutamine + ATP + H2O = L-glutaminyl-tRNA(Gln) + L-glutamate + ADP + phosphate + H(+). In terms of biological role, allows the formation of correctly charged Gln-tRNA(Gln) through the transamidation of misacylated Glu-tRNA(Gln) in organisms which lack glutaminyl-tRNA synthetase. The reaction takes place in the presence of glutamine and ATP through an activated gamma-phospho-Glu-tRNA(Gln). The polypeptide is Glutamyl-tRNA(Gln) amidotransferase subunit A (Staphylococcus aureus (strain Mu3 / ATCC 700698)).